The following is a 996-amino-acid chain: MKKIILMLLLFSIFFILKSESQNTLVLNALIYDNTPSRNPDFEASGSVGVQKNLVKSVLGSDGTPVYCCGNSPSATIHNQTTFQSWFHNVPGVNLPIQKDIILTQSLSNPNIYSYSNDSYFVIDGQGFDDKSVYPNERVYRDAFGNPHNFHFCLQAHTEFQYKTGDVFNFAGDDDVWVFINNILVVDLGGIHTIASASVNLDLLGLTPGQNYPFDFFYCERHTVESHIRIETSLAFKCPRYDECGVCEGDGTSCCTPNNCDNNPIYRTNCITAKCSNNVCVTSAPYCSSTEPCTVGLCTPGVGCSVVPKNCVNENHCTQDSCNSTINACQHDPIPDCINCAYIGCITTDYCNEQVCSADGRSCETRPKNCDDLNFCTVDTCSNGVCIYTRIDNCVNCTGPGIGCITTDQCNPNVCSPDGNSCIIQPKNCSDGNACNDPSCVSGGMCMLTPVNCDDGDDCTFDSCSSTVGCIHTNISNCVECQNIACITTDFCNVKICINNGTTCDTVPKTCDDGDSCTIDSCVSPSGACLYEPIANCVNCGGNQCITTDFCLPLICGPDGVTCAVEPKKCDDFNPCTFDSCISPQGDCGNAPIPGCVACNEILGCTTTDPCHPITCSAIGDQCVSTDKDCEDGNHCTINSCQNNNGTATCLNSLITHCTDCPGIGCTTTDFCFQQVCSATDGDVCTTVPLNCDDGLQCTVDSCIGPMGVCSHIAIAPKCLECALEPCITTDNCQPVICGPDGRCIQETIEDFCDDYNYCTVDTCTGVGCEHASISGCRNCTNGIGCTTPSDDACNLQVCSETGDSCLTMVLNCDDNNDCTEDKCLNTGICQNNPIDGCVTPSPVSIGGTIPPTTTGVSQVECDCCPIGQKCLLVNGHEICIKPATTGGIPELTTGCAGTTTGRATGHYTESGTGNPHLCDRYHCKRGMECHVVNGVPECLPSNYKCLDCLDLHCERQGDFTCFMVKNPNFISSKHSCYGESCCKFTPVCKPKGHSL.

A signal peptide spans 1-21; the sequence is MKKIILMLLLFSIFFILKSES. Asn79, Asn117, Asn323, Asn396, Asn428, Asn474, Asn500, Asn645, and Asn779 each carry an N-linked (GlcNAc...) asparagine glycan. Residues 105–250 form the PA14 domain; sequence QSLSNPNIYS…YDECGVCEGD (146 aa).

Belongs to the prespore-cell-inducing factor family.

It is found in the secreted. The chain is Protein psiR (psiR) from Dictyostelium discoideum (Social amoeba).